The sequence spans 64 residues: Small ribosomal subunit protein eS17 (64 aa).

The protein belongs to the eukaryotic ribosomal protein eS17 family.

In Methanospirillum hungatei JF-1 (strain ATCC 27890 / DSM 864 / NBRC 100397 / JF-1), this protein is Small ribosomal subunit protein eS17.